A 259-amino-acid polypeptide reads, in one-letter code: Leucine-rich repeat-containing protein 3B (259 aa).

An N-terminal signal peptide occupies residues 1 to 33 (MNLVDLWLTRSLSMCLLLQSFVLMILCFHSASM). In terms of domain architecture, LRRNT spans 34–64 (CPKGCLCSSSGGLNVTCSNANLKEIPRDLPP). An N-linked (GlcNAc...) asparagine glycan is attached at Asn-47. LRR repeat units lie at residues 65–86 (ETVL…IFKD), 89–110 (QLRV…AFKG), and 114–135 (TLQT…AFNN). Asn-94 carries an N-linked (GlcNAc...) asparagine glycan. Positions 145–197 (NPWHCDCTLQQVLRSMASNHETAHNVICKTSVLDEHAGRPFLNAANDADLCNL) constitute an LRRCT domain. The helical transmembrane segment at 205 to 225 (AMLVTMFGWFTMVISYVVYYV) threads the bilayer.

Belongs to the LRRC3 family.

The protein localises to the membrane. The polypeptide is Leucine-rich repeat-containing protein 3B (LRRC3B) (Homo sapiens (Human)).